The primary structure comprises 493 residues: Leucine-rich repeat-containing protein 14 (493 aa).

One copy of the LRR 1; degenerate repeat lies at 111–146 (KHALRVLDMTGLLDDGVEQDPGTMSMWDCTAAVART). Residues 194 to 218 (RLCCRDLRAEDLPMRNTVALLQLLD) form an LRR 2; degenerate repeat. The stretch at 219-246 (AGCLRRVDLRFNNLGLRGLSVIIPHVAR) is one LRR 3; degenerate repeat. One copy of the LRR 4; degenerate repeat lies at 247 to 282 (FQHLASLRLHYVHGDSRQPSVDGEDNFRYFLAQMGR). 5 LRR repeats span residues 283–307 (FTCLRELSMGSSLLSGRLDQLLSTL), 308–339 (QSPLESLELAFCALLPEDLRFLARSPHAAHLK), 340–360 (KLDLSGNDLSGSQLAPFQGLL), 364–391 (AATLLHLELTECQLADTQLLATLPILTQ), and 392–416 (CASLRYLGLYGNPLSMAGLKELLRD).

This sequence belongs to the PRAME family. LRRC14 subfamily. As to quaternary structure, interacts with IKBKB; disrupts IKBKB-IKBKG interaction preventing I-kappa-B-kinase (IKK) core complex formation and leading to a decrease of IKBKB phosphorylation and NF-kappaB activation. Interacts with CHUK.

The protein localises to the cytoplasm. Functionally, negatively regulates Toll-like receptor-mediated NF-kappa-B signaling by disrupting IKK core complex formation through interaction with IKBKB. In Homo sapiens (Human), this protein is Leucine-rich repeat-containing protein 14.